The primary structure comprises 601 residues: A-type ATP synthase subunit A (601 aa).

235–242 (GGFGTGKT) contributes to the ATP binding site.

This sequence belongs to the ATPase alpha/beta chains family. Has multiple subunits with at least A(3), B(3), C, D, E, F, H, I and proteolipid K(x).

Its subcellular location is the cell membrane. The enzyme catalyses ATP + H2O + 4 H(+)(in) = ADP + phosphate + 5 H(+)(out). Functionally, component of the A-type ATP synthase that produces ATP from ADP in the presence of a proton gradient across the membrane. The A chain is the catalytic subunit. The sequence is that of A-type ATP synthase subunit A from Thermofilum pendens (strain DSM 2475 / Hrk 5).